Consider the following 560-residue polypeptide: Hemocyanin, units G and H (560 aa).

C1 and C11 are joined by a disulfide. Positions 1–184 (CPTPDAPQYA…AKGLVSQHIE (184 aa)) are unit G. Positions 12–14 (CLH) form a cross-link, 2'-(S-cysteinyl)-histidine (Cys-His). C93 and C98 form a disulfide bridge. N142 carries an N-linked (GlcNAc...) asparagine glycan. The segment at 185–560 (DHDTETLIRK…KPGTGTQLTR (376 aa)) is unit H. Residue H230 coordinates Cu cation. C236 and C246 form a disulfide bridge. N240 carries an N-linked (GlcNAc...) asparagine glycan. The segment at residues 247–249 (CQH) is a cross-link (2'-(S-cysteinyl)-histidine (Cys-His)). H249, H258, H358, H362, and H389 together coordinate Cu cation. Cystine bridges form between C348–C415 and C476–C482.

It belongs to the tyrosinase family. Hemocyanin subfamily. In terms of assembly, decamers of large identical subunits (390 kDa), each containing 8 globular oxygen-binding functional units. It depends on Cu(2+) as a cofactor.

In terms of biological role, hemocyanins are copper-containing oxygen carriers occurring freely dissolved in the hemolymph of many mollusks and arthropods. In Sepia officinalis (Common cuttlefish), this protein is Hemocyanin, units G and H.